A 363-amino-acid chain; its full sequence is 3-isopropylmalate dehydrogenase (363 aa).

An NAD(+)-binding site is contributed by glycine 79–glutamate 92. Residues arginine 100, arginine 110, arginine 139, and aspartate 228 each coordinate substrate. The Mg(2+) site is built by aspartate 228, aspartate 252, and aspartate 256. Residue glycine 286–asparagine 298 coordinates NAD(+).

The protein belongs to the isocitrate and isopropylmalate dehydrogenases family. LeuB type 1 subfamily. As to quaternary structure, homodimer. Requires Mg(2+) as cofactor. It depends on Mn(2+) as a cofactor.

It is found in the cytoplasm. The enzyme catalyses (2R,3S)-3-isopropylmalate + NAD(+) = 4-methyl-2-oxopentanoate + CO2 + NADH. Its pathway is amino-acid biosynthesis; L-leucine biosynthesis; L-leucine from 3-methyl-2-oxobutanoate: step 3/4. Functionally, catalyzes the oxidation of 3-carboxy-2-hydroxy-4-methylpentanoate (3-isopropylmalate) to 3-carboxy-4-methyl-2-oxopentanoate. The product decarboxylates to 4-methyl-2 oxopentanoate. This is 3-isopropylmalate dehydrogenase from Vibrio vulnificus (strain CMCP6).